Reading from the N-terminus, the 320-residue chain is Geranylgeranyl pyrophosphate synthase (320 aa).

Residues Lys35, Arg38, and His67 each coordinate isopentenyl diphosphate. Residues Asp74 and Asp78 each coordinate Mg(2+). Arg83 provides a ligand contact to dimethylallyl diphosphate. Residue Arg84 coordinates isopentenyl diphosphate. Residues Lys168, Thr169, Gln206, Lys223, and Lys233 each contribute to the dimethylallyl diphosphate site.

Belongs to the FPP/GGPP synthase family. Mg(2+) is required as a cofactor.

It is found in the cytoplasm. It catalyses the reaction isopentenyl diphosphate + dimethylallyl diphosphate = (2E)-geranyl diphosphate + diphosphate. The enzyme catalyses isopentenyl diphosphate + (2E)-geranyl diphosphate = (2E,6E)-farnesyl diphosphate + diphosphate. The catalysed reaction is isopentenyl diphosphate + (2E,6E)-farnesyl diphosphate = (2E,6E,10E)-geranylgeranyl diphosphate + diphosphate. Its pathway is isoprenoid biosynthesis; farnesyl diphosphate biosynthesis; farnesyl diphosphate from geranyl diphosphate and isopentenyl diphosphate: step 1/1. The protein operates within isoprenoid biosynthesis; geranyl diphosphate biosynthesis; geranyl diphosphate from dimethylallyl diphosphate and isopentenyl diphosphate: step 1/1. It functions in the pathway isoprenoid biosynthesis; geranylgeranyl diphosphate biosynthesis; geranylgeranyl diphosphate from farnesyl diphosphate and isopentenyl diphosphate: step 1/1. Its function is as follows. Catalyzes the trans-addition of the 3 molecules of IPP onto DMAPP to form geranylgeranyl pyrophosphate. May be involved in vesicle trafficking and protein sorting. The sequence is that of Geranylgeranyl pyrophosphate synthase (BTS1) from Eremothecium gossypii (strain ATCC 10895 / CBS 109.51 / FGSC 9923 / NRRL Y-1056) (Yeast).